A 610-amino-acid chain; its full sequence is UvrABC system protein C (610 aa).

A GIY-YIG domain is found at 16-94 (SQPGVYRMYD…IKLYQPRYNV (79 aa)). Positions 204-239 (DQVLTQLIARMEKASQSLEFEEAARIRDQIQAVRRV) constitute a UVR domain. The interval 540–559 (HAISGHRKKRAKVKSTSSLE) is disordered. The span at 543-552 (SGHRKKRAKV) shows a compositional bias: basic residues.

This sequence belongs to the UvrC family. In terms of assembly, interacts with UvrB in an incision complex.

It localises to the cytoplasm. Functionally, the UvrABC repair system catalyzes the recognition and processing of DNA lesions. UvrC both incises the 5' and 3' sides of the lesion. The N-terminal half is responsible for the 3' incision and the C-terminal half is responsible for the 5' incision. In Klebsiella pneumoniae (strain 342), this protein is UvrABC system protein C.